The sequence spans 355 residues: Serum paraoxonase/arylesterase 1 (355 aa).

A disulfide bond links cysteine 42 and cysteine 353. Ca(2+)-binding residues include glutamate 53 and aspartate 54. Histidine 115 acts as the Proton acceptor in catalysis. Positions 117, 168, 169, and 224 each coordinate Ca(2+). Asparagine 253 carries an N-linked (GlcNAc...) asparagine glycan. The Ca(2+) site is built by aspartate 269 and asparagine 270. Residues asparagine 270 and asparagine 324 are each glycosylated (N-linked (GlcNAc...) asparagine).

It belongs to the paraoxonase family. As to quaternary structure, homodimer. Interacts with CLU. Requires Ca(2+) as cofactor. Post-translationally, the signal sequence is not cleaved. In terms of tissue distribution, plasma, liver, kidney, heart, brain, small intestine and lung. In the plasma, associated with HDL.

It localises to the secreted. It is found in the extracellular space. It catalyses the reaction a phenyl acetate + H2O = a phenol + acetate + H(+). It carries out the reaction An aryl dialkyl phosphate + H2O = dialkyl phosphate + an aryl alcohol.. The enzyme catalyses an N-acyl-L-homoserine lactone + H2O = an N-acyl-L-homoserine + H(+). Its function is as follows. Hydrolyzes the toxic metabolites of a variety of organophosphorus insecticides. Capable of hydrolyzing a broad spectrum of organophosphate substrates and lactones, and a number of aromatic carboxylic acid esters. Mediates an enzymatic protection of low density lipoproteins against oxidative modification. In Mus musculus (Mouse), this protein is Serum paraoxonase/arylesterase 1 (Pon1).